The sequence spans 89 residues: U-scoloptoxin(11)-Sm4a (89 aa).

The N-terminal stretch at Met1–Ser17 is a signal peptide.

Belongs to the scoloptoxin-11 family. Contains 3 disulfide bonds. In terms of tissue distribution, expressed by the venom gland.

It localises to the secreted. The chain is U-scoloptoxin(11)-Sm4a from Scolopendra morsitans (Tanzanian blue ringleg centipede).